The primary structure comprises 699 residues: Bifunctional protein GAL10 (699 aa).

The segment at 1–357 (MTAQLQSEST…TTENPFGYQL (357 aa)) is galactowaldenase. Residue 13 to 44 (IVLVTGGAGYIGSHTVVELIENGYDCVVADNL) participates in NAD(+) binding. Positions 358–699 (RGVEARFSAE…YGSKIVYRFS (342 aa)) are mutarotase. His537 serves as the catalytic For mutarotase activity. Phosphoserine is present on Ser562.

The protein in the N-terminal section; belongs to the NAD(P)-dependent epimerase/dehydratase family. This sequence in the C-terminal section; belongs to the aldose epimerase family. Requires NAD(+) as cofactor.

The enzyme catalyses UDP-alpha-D-glucose = UDP-alpha-D-galactose. The catalysed reaction is alpha-D-glucose = beta-D-glucose. The protein operates within carbohydrate metabolism; galactose metabolism. It functions in the pathway carbohydrate metabolism; hexose metabolism. Its function is as follows. Mutarotase converts alpha-aldose to the beta-anomer. It is active on D-glucose, L-arabinose, D-xylose, D-galactose, maltose and lactose. The sequence is that of Bifunctional protein GAL10 (GAL10) from Saccharomyces cerevisiae (strain ATCC 204508 / S288c) (Baker's yeast).